Here is an 827-residue protein sequence, read N- to C-terminus: Periplasmic nitrate reductase (827 aa).

The tat-type signal signal peptide spans 1–32 (MELNRRDFMKANAAAAAALAAGITLPVKNVYA). The 57-residue stretch at 37–93 (IKWDKAPCRFCGTGCSVLVGTQNGRMVASQGDPDAEVNRGLNCIKGYFLPKIIYGKD) folds into the 4Fe-4S Mo/W bis-MGD-type domain. Positions 44, 47, 51, and 79 each coordinate [4Fe-4S] cluster. Mo-bis(molybdopterin guanine dinucleotide)-binding positions include K81, Q148, N173, C177, 210 to 217 (WGSNMAEM), 241 to 245 (STFEH), M371, Q375, N481, 507 to 508 (SD), K530, D557, and 717 to 726 (TGRVLEHWHS). Position 793 (F793) interacts with substrate. Mo-bis(molybdopterin guanine dinucleotide) is bound by residues N801 and K818.

The protein belongs to the prokaryotic molybdopterin-containing oxidoreductase family. NasA/NapA/NarB subfamily. In terms of assembly, component of the periplasmic nitrate reductase NapAB complex composed of NapA and NapB. It depends on [4Fe-4S] cluster as a cofactor. Requires Mo-bis(molybdopterin guanine dinucleotide) as cofactor. Predicted to be exported by the Tat system. The position of the signal peptide cleavage has not been experimentally proven.

It is found in the periplasm. It carries out the reaction 2 Fe(II)-[cytochrome] + nitrate + 2 H(+) = 2 Fe(III)-[cytochrome] + nitrite + H2O. Functionally, catalytic subunit of the periplasmic nitrate reductase complex NapAB. Receives electrons from NapB and catalyzes the reduction of nitrate to nitrite. The sequence is that of Periplasmic nitrate reductase from Glaesserella parasuis serovar 5 (strain SH0165) (Haemophilus parasuis).